We begin with the raw amino-acid sequence, 535 residues long: CTP synthase (535 aa).

The 236-residue stretch at 300-535 (RIGIVGKYAP…LVSASYERSK (236 aa)) folds into the Glutamine amidotransferase type-1 domain. Catalysis depends on for GATase activity residues cysteine 385, histidine 509, and glutamate 511.

It belongs to the CTP synthase family.

The catalysed reaction is UTP + L-glutamine + ATP + H2O = CTP + L-glutamate + ADP + phosphate + 2 H(+). It participates in pyrimidine metabolism; CTP biosynthesis via de novo pathway; CTP from UDP: step 2/2. In terms of biological role, catalyzes the ATP-dependent amination of UTP to CTP with either L-glutamine or ammonia as the source of nitrogen. The polypeptide is CTP synthase (Encephalitozoon cuniculi (strain GB-M1) (Microsporidian parasite)).